The following is a 215-amino-acid chain: uncharacterized protein (215 aa).

Positions His120–Asn147 are disordered.

This is an uncharacterized protein from Homo sapiens (Human).